A 423-amino-acid chain; its full sequence is tRNA(Ile)-lysidine synthase (423 aa).

29–34 lines the ATP pocket; that stretch reads SGGKDS.

It belongs to the tRNA(Ile)-lysidine synthase family.

The protein resides in the cytoplasm. The catalysed reaction is cytidine(34) in tRNA(Ile2) + L-lysine + ATP = lysidine(34) in tRNA(Ile2) + AMP + diphosphate + H(+). Ligates lysine onto the cytidine present at position 34 of the AUA codon-specific tRNA(Ile) that contains the anticodon CAU, in an ATP-dependent manner. Cytidine is converted to lysidine, thus changing the amino acid specificity of the tRNA from methionine to isoleucine. This is tRNA(Ile)-lysidine synthase from Lactococcus lactis subsp. lactis (strain IL1403) (Streptococcus lactis).